A 633-amino-acid polypeptide reads, in one-letter code: Probable potassium transport system protein Kup (633 aa).

12 helical membrane-spanning segments follow: residues Met21–Leu41, Ile61–Val81, Leu112–Pro132, Gly149–Gln169, Ile176–Val196, Phe217–Thr237, Trp258–Leu278, Leu290–Ile310, Ile348–Phe368, Ala377–Met397, Leu398–Val418, and Ile430–Thr450.

This sequence belongs to the HAK/KUP transporter (TC 2.A.72) family.

The protein resides in the cell inner membrane. It catalyses the reaction K(+)(in) + H(+)(in) = K(+)(out) + H(+)(out). In terms of biological role, transport of potassium into the cell. Likely operates as a K(+):H(+) symporter. This is Probable potassium transport system protein Kup from Pseudomonas fluorescens (strain Pf0-1).